Reading from the N-terminus, the 273-residue chain is Glucosamine-6-phosphate deaminase (273 aa).

Asp-72 serves as the catalytic Proton acceptor; for enolization step. Asp-141 serves as the catalytic For ring-opening step. His-143 functions as the Proton acceptor; for ring-opening step in the catalytic mechanism. Residue Glu-148 is the For ring-opening step of the active site.

This sequence belongs to the glucosamine/galactosamine-6-phosphate isomerase family. In terms of assembly, homohexamer.

The protein resides in the cytoplasm. The enzyme catalyses alpha-D-glucosamine 6-phosphate + H2O = beta-D-fructose 6-phosphate + NH4(+). It participates in nucleotide-sugar biosynthesis; UDP-N-acetyl-alpha-D-glucosamine biosynthesis; alpha-D-glucosamine 6-phosphate from D-fructose 6-phosphate: step 1/1. Catalyzes the reversible conversion of alpha-D-glucosamine 6-phosphate (GlcN-6P) into beta-D-fructose 6-phosphate (Fru-6P) and ammonium ion, a regulatory reaction step in de novo uridine diphosphate-N-acetyl-alpha-D-glucosamine (UDP-GlcNAc) biosynthesis via hexosamine pathway. The polypeptide is Glucosamine-6-phosphate deaminase (Drosophila melanogaster (Fruit fly)).